Reading from the N-terminus, the 297-residue chain is Probable endonuclease 4 (297 aa).

Zn(2+) is bound by residues H68, H109, E144, D178, H181, H213, D226, H228, and E258.

It belongs to the AP endonuclease 2 family. The cofactor is Zn(2+).

The catalysed reaction is Endonucleolytic cleavage to 5'-phosphooligonucleotide end-products.. Its function is as follows. Endonuclease IV plays a role in DNA repair. It cleaves phosphodiester bonds at apurinic or apyrimidinic (AP) sites, generating a 3'-hydroxyl group and a 5'-terminal sugar phosphate. This is Probable endonuclease 4 from Enterococcus faecalis (strain ATCC 700802 / V583).